The primary structure comprises 367 residues: Probable butyrate kinase (367 aa).

Belongs to the acetokinase family.

It localises to the cytoplasm. It catalyses the reaction butanoate + ATP = butanoyl phosphate + ADP. This chain is Probable butyrate kinase, found in Exiguobacterium sibiricum (strain DSM 17290 / CCUG 55495 / CIP 109462 / JCM 13490 / 255-15).